The chain runs to 267 residues: GTP cyclohydrolase FolE2 (267 aa).

This sequence belongs to the GTP cyclohydrolase IV family.

It carries out the reaction GTP + H2O = 7,8-dihydroneopterin 3'-triphosphate + formate + H(+). Its pathway is cofactor biosynthesis; 7,8-dihydroneopterin triphosphate biosynthesis; 7,8-dihydroneopterin triphosphate from GTP: step 1/1. Functionally, converts GTP to 7,8-dihydroneopterin triphosphate. The chain is GTP cyclohydrolase FolE2 from Nitrosococcus oceani (strain ATCC 19707 / BCRC 17464 / JCM 30415 / NCIMB 11848 / C-107).